The primary structure comprises 464 residues: Cytoplasmic tRNA 2-thiolation protein 2 (464 aa).

This sequence belongs to the CTU2/NCS2 family.

It localises to the cytoplasm. It participates in tRNA modification; 5-methoxycarbonylmethyl-2-thiouridine-tRNA biosynthesis. Functionally, plays a central role in 2-thiolation of mcm(5)S(2)U at tRNA wobble positions of tRNA(Lys), tRNA(Glu) and tRNA(Gln). May act by forming a heterodimer with NCS6/CTU1 that ligates sulfur from thiocarboxylated URM1 onto the uridine of tRNAs at wobble position. The chain is Cytoplasmic tRNA 2-thiolation protein 2 from Oryza sativa subsp. indica (Rice).